A 374-amino-acid chain; its full sequence is Probable trehalose-phosphate phosphatase 9 (374 aa).

This sequence belongs to the trehalose phosphatase family. Requires a divalent metal cation as cofactor.

It catalyses the reaction alpha,alpha-trehalose 6-phosphate + H2O = alpha,alpha-trehalose + phosphate. It participates in glycan biosynthesis; trehalose biosynthesis. Its function is as follows. Removes the phosphate from trehalose 6-phosphate to produce free trehalose. Trehalose accumulation in plant may improve abiotic stress tolerance. The chain is Probable trehalose-phosphate phosphatase 9 (TPP9) from Oryza sativa subsp. japonica (Rice).